Here is a 150-residue protein sequence, read N- to C-terminus: Kirola (150 aa).

M1 bears the N-acetylmethionine mark.

Belongs to the MLP family. As to quaternary structure, monomer. Post-translationally, the N-terminus is blocked.

The sequence is that of Kirola from Actinidia deliciosa (Kiwi).